The chain runs to 150 residues: Nucleoside diphosphate kinase (150 aa).

ATP-binding residues include lysine 10, phenylalanine 58, arginine 86, threonine 92, arginine 103, and asparagine 113. Histidine 116 acts as the Pros-phosphohistidine intermediate in catalysis.

This sequence belongs to the NDK family. Mg(2+) serves as cofactor.

It localises to the cytoplasm. It catalyses the reaction a 2'-deoxyribonucleoside 5'-diphosphate + ATP = a 2'-deoxyribonucleoside 5'-triphosphate + ADP. The catalysed reaction is a ribonucleoside 5'-diphosphate + ATP = a ribonucleoside 5'-triphosphate + ADP. In terms of biological role, major role in the synthesis of nucleoside triphosphates other than ATP. The ATP gamma phosphate is transferred to the NDP beta phosphate via a ping-pong mechanism, using a phosphorylated active-site intermediate. This is Nucleoside diphosphate kinase from Methanobrevibacter smithii (strain ATCC 35061 / DSM 861 / OCM 144 / PS).